A 528-amino-acid polypeptide reads, in one-letter code: UDP-glucuronosyltransferase 1A9 (528 aa).

The N-terminal stretch at 1 to 23 is a signal peptide; the sequence is MAPVAFPTSFFLCLLLASGLAQA. N69 carries an N-linked (GlcNAc...) asparagine glycan. K97 bears the N6-succinyllysine mark. 2 N-linked (GlcNAc...) asparagine glycosylation sites follow: N290 and N428. Residues 486–506 traverse the membrane as a helical segment; sequence VIGFLLAIVLTVVFIVFKCCA.

It belongs to the UDP-glycosyltransferase family. In terms of assembly, homodimer. Homooligomer. Interacts with UGT1A1, UGT1A3, UGT1A4, UGT1A6, UGT1A7, UGT1A8 and UGT1A10 to form heterodimers. Highly expressed in liver and at lower levels in stomach and kidney.

Its subcellular location is the endoplasmic reticulum membrane. It carries out the reaction glucuronate acceptor + UDP-alpha-D-glucuronate = acceptor beta-D-glucuronoside + UDP + H(+). It catalyses the reaction 2-hydroxy-17beta-estradiol + UDP-alpha-D-glucuronate = 2-hydroxy-17beta-estradiol 3-O-(beta-D-glucuronate) + UDP + H(+). The enzyme catalyses 4-hydroxy-17beta-estradiol + UDP-alpha-D-glucuronate = 17beta-estradiol 4-O-(beta-D-glucuronate) + UDP + H(+). The catalysed reaction is 2-hydroxyestrone + UDP-alpha-D-glucuronate = 2-hydroxyestrone 3-O-(beta-D-glucuronate) + UDP + H(+). It carries out the reaction 4-hydroxyestrone + UDP-alpha-D-glucuronate = estrone 4-O-(beta-D-glucuronate) + UDP + H(+). It catalyses the reaction prunetin + UDP-alpha-D-glucuronate = prunetin-5-O-beta-D-glucuronide + UDP. The enzyme catalyses 8-iso-prostaglandin F2alpha + UDP-alpha-D-glucuronate = 8-iso-prostaglandin F2alpha-glucuronide + UDP + H(+). The catalysed reaction is 5-epi-5-F2t-IsoP + UDP-alpha-D-glucuronate = 5-epi-5-F2t-IsoP-glucuronide + UDP + H(+). It carries out the reaction (5Z,8Z,11Z,14Z)-eicosatetraenoate + UDP-alpha-D-glucuronate = O-[(5Z),(8Z),(11Z),(14Z)-eicosatetraenoyl]-beta-D-glucuronate + UDP. It catalyses the reaction 15-hydroxy-(5Z,8Z,11Z,13E)-eicosatetraenoate + UDP-alpha-D-glucuronate = 15-O-(beta-D-glucuronosyl)-(5Z,8Z,11Z,14Z)-eicosatetraenoate + UDP + H(+). The enzyme catalyses prostaglandin B1 + UDP-alpha-D-glucuronate = 15-O-(beta-D-glucuronosyl)-prostaglandin B1 + UDP + H(+). The catalysed reaction is (E)-ferulate + UDP-alpha-D-glucuronate = (E)-4-O-(beta-D-glucuronosyl)-ferulate + UDP + H(+). It carries out the reaction (E)-ferulate + UDP-alpha-D-glucuronate = (E)-ferulic acid beta-D-glucuronate ester + UDP. It catalyses the reaction candesartan + UDP-alpha-D-glucuronate = candesartan O-beta-D-glucuronoside + UDP. The enzyme catalyses SN-38 + UDP-alpha-D-glucuronate = SN-38 O-beta-D-glucuronide + UDP + H(+). The catalysed reaction is mycophenolate + UDP-alpha-D-glucuronate = mycophenolate 7-O-beta-D-glucuronide + UDP + H(+). UDP-glucuronosyltransferase (UGT) that catalyzes phase II biotransformation reactions in which lipophilic substrates are conjugated with glucuronic acid to increase the metabolite's water solubility, thereby facilitating excretion into either the urine or bile. Essential for the elimination and detoxification of drugs, xenobiotics and endogenous compounds. Catalyzes the glucuronidation of endogenous estrogen hormones such as estradiol and estrone. Involved in the glucuronidation of arachidonic acid (AA) and AA-derived eicosanoids including 15-HETE, PGB1 and F2-isoprostanes (8-iso-PGF2alpha and 5-epi-5-F2t-IsoP). Glucuronates the phytochemical ferulic acid efficently at both the phenolic or the carboxylic acid group. Also catalyzes the glucuronidation of the isoflavones genistein, daidzein, glycitein, formononetin, biochanin A and prunetin, which are phytoestrogens with anticancer and cardiovascular properties. Involved in the glucuronidation of the AGTR1 angiotensin receptor antagonist caderastan, a drug which can inhibit the effect of angiotensin II. Involved in the biotransformation of 7-ethyl-10-hydroxycamptothecin (SN-38), the pharmacologically active metabolite of the anticancer drug irinotecan. Also metabolizes mycophenolate, an immunosuppressive agent. This chain is UDP-glucuronosyltransferase 1A9, found in Mus musculus (Mouse).